The sequence spans 175 residues: Ribosome maturation factor RimM (175 aa).

A PRC barrel domain is found at 100-173 (EGEYYFHEII…TIIIRPMEGL (74 aa)).

Belongs to the RimM family. Binds ribosomal protein uS19.

Its subcellular location is the cytoplasm. An accessory protein needed during the final step in the assembly of 30S ribosomal subunit, possibly for assembly of the head region. Essential for efficient processing of 16S rRNA. May be needed both before and after RbfA during the maturation of 16S rRNA. It has affinity for free ribosomal 30S subunits but not for 70S ribosomes. The polypeptide is Ribosome maturation factor RimM (Geobacillus kaustophilus (strain HTA426)).